We begin with the raw amino-acid sequence, 114 residues long: Fluoride-specific ion channel FluC 2 (114 aa).

3 consecutive transmembrane segments (helical) span residues 30–50 (FPVA…LLSG), 57–77 (TFAL…TFAV), and 88–108 (ALPS…AAWL). 2 residues coordinate Na(+): glycine 67 and threonine 70.

This sequence belongs to the fluoride channel Fluc/FEX (TC 1.A.43) family.

Its subcellular location is the cell membrane. The catalysed reaction is fluoride(in) = fluoride(out). Its activity is regulated as follows. Na(+) is not transported, but it plays an essential structural role and its presence is essential for fluoride channel function. Functionally, fluoride-specific ion channel. Important for reducing fluoride concentration in the cell, thus reducing its toxicity. This is Fluoride-specific ion channel FluC 2 from Rhodococcus jostii (strain RHA1).